The following is a 189-amino-acid chain: Parkinson disease protein 7 homolog (189 aa).

Ala-2 is modified (N-acetylalanine). S-palmitoyl cysteine attachment occurs at residues Cys-46 and Cys-53. The residue at position 67 (Tyr-67) is a Phosphotyrosine. Cys-106 functions as the Nucleophile in the catalytic mechanism. Cysteine sulfinic acid (-SO2H); alternate is present on Cys-106. A lipid anchor (S-palmitoyl cysteine; alternate) is attached at Cys-106. The active site involves His-126. Lys-130 participates in a covalent cross-link: Glycyl lysine isopeptide (Lys-Gly) (interchain with G-Cter in SUMO). Lys-148 carries the N6-acetyllysine modification. Lys-182 carries the N6-succinyllysine modification.

Belongs to the peptidase C56 family. As to quaternary structure, homodimer. Binds EFCAB6/DJBP and PIAS2. Part of a ternary complex containing PARK7, EFCAB6/DJBP and AR. Interacts (via N-terminus) with OTUD7B. Interacts with BBS1, HIPK1, CLCF1 and MTERF. Forms a complex with PINK1 and PRKN. Interacts (via C-terminus) with NCF1; the interaction is enhanced by LPS and modulates NCF1 phosphorylation and membrane translocation. Interacts with NENF. Deglycase activity does not require glutathione as a cofactor, however, glycated glutathione constitutes a PARK7 substrate. is required as a cofactor. In terms of processing, sumoylated on Lys-130 by PIAS2 or PIAS4; which is essential for cell-growth promoting activity and transforming activity. Post-translationally, undergoes cleavage of a C-terminal peptide and subsequent activation of protease activity in response to oxidative stress.

The protein resides in the cell membrane. Its subcellular location is the cytoplasm. It is found in the nucleus. It localises to the membrane raft. The protein localises to the mitochondrion. The protein resides in the endoplasmic reticulum. It catalyses the reaction N(omega)-(1-hydroxy-2-oxopropyl)-L-arginyl-[protein] + H2O = lactate + L-arginyl-[protein] + H(+). The enzyme catalyses N(6)-(1-hydroxy-2-oxopropyl)-L-lysyl-[protein] + H2O = lactate + L-lysyl-[protein] + H(+). The catalysed reaction is S-(1-hydroxy-2-oxopropyl)-L-cysteinyl-[protein] + H2O = lactate + L-cysteinyl-[protein] + H(+). It carries out the reaction N(omega)-(1-hydroxy-2-oxoethyl)-L-arginyl-[protein] + H2O = L-arginyl-[protein] + glycolate + H(+). It catalyses the reaction N(6)-(1-hydroxy-2-oxoethyl)-L-lysyl-[protein] + H2O = glycolate + L-lysyl-[protein] + H(+). The enzyme catalyses S-(1-hydroxy-2-oxoethyl)-L-cysteinyl-[protein] + H2O = glycolate + L-cysteinyl-[protein] + H(+). The catalysed reaction is N(2)-(1-hydroxy-2-oxopropyl)-dGTP + H2O = lactate + dGTP + H(+). It carries out the reaction N(2)-(1-hydroxy-2-oxopropyl)-GTP + H2O = lactate + GTP + H(+). It catalyses the reaction N(2)-(1-hydroxy-2-oxopropyl)-GDP + H2O = lactate + GDP + H(+). The enzyme catalyses N(2)-(1-hydroxy-2-oxopropyl)-GMP + H2O = lactate + GMP + H(+). The catalysed reaction is N(2)-(1-hydroxy-2-oxoethyl)-dGTP + H2O = dGTP + glycolate + H(+). It carries out the reaction N(2)-(1-hydroxy-2-oxoethyl)-GTP + H2O = glycolate + GTP + H(+). It catalyses the reaction N(2)-(1-hydroxy-2-oxoethyl)-GDP + H2O = glycolate + GDP + H(+). The enzyme catalyses N(2)-(1-hydroxy-2-oxoethyl)-GMP + H2O = glycolate + GMP + H(+). The catalysed reaction is an N(2)-(1-hydroxy-2-oxopropyl)-guanosine in RNA + H2O = a guanosine in RNA + lactate + H(+). It carries out the reaction an N(2)-(1-hydroxy-2-oxopropyl)-2'-deoxyguanosine in DNA + H2O = a 2'-deoxyguanosine in DNA + lactate + H(+). It catalyses the reaction an N(2)-(1-hydroxy-2-oxoethyl)-guanosine in RNA + H2O = a guanosine in RNA + glycolate + H(+). The enzyme catalyses an N(2)-(1-hydroxy-2-oxoethyl)-2'-deoxyguanosine in DNA + H2O = a 2'-deoxyguanosine in DNA + glycolate + H(+). Its function is as follows. Multifunctional protein with controversial molecular function which plays an important role in cell protection against oxidative stress and cell death acting as oxidative stress sensor and redox-sensitive chaperone and protease. It is involved in neuroprotective mechanisms like the stabilization of NFE2L2 and PINK1 proteins, male fertility as a positive regulator of androgen signaling pathway as well as cell growth and transformation through, for instance, the modulation of NF-kappa-B signaling pathway. Has been described as a protein and nucleotide deglycase that catalyzes the deglycation of the Maillard adducts formed between amino groups of proteins or nucleotides and reactive carbonyl groups of glyoxals. But this function is rebuted by other works. As a protein deglycase, repairs methylglyoxal- and glyoxal-glycated proteins, and releases repaired proteins and lactate or glycolate, respectively. Deglycates cysteine, arginine and lysine residues in proteins, and thus reactivates these proteins by reversing glycation by glyoxals. Acts on early glycation intermediates (hemithioacetals and aminocarbinols), preventing the formation of advanced glycation endproducts (AGE) that cause irreversible damage. Also functions as a nucleotide deglycase able to repair glycated guanine in the free nucleotide pool (GTP, GDP, GMP, dGTP) and in DNA and RNA. Is thus involved in a major nucleotide repair system named guanine glycation repair (GG repair), dedicated to reversing methylglyoxal and glyoxal damage via nucleotide sanitization and direct nucleic acid repair. Protects histones from adduction by methylglyoxal, controls the levels of methylglyoxal-derived argininine modifications on chromatin. Able to remove the glycations and restore histone 3, histone glycation disrupts both local and global chromatin architecture by altering histone-DNA interactions as well as histone acetylation and ubiquitination levels. Displays a very low glyoxalase activity that may reflect its deglycase activity. Eliminates hydrogen peroxide and protects cells against hydrogen peroxide-induced cell death. Required for correct mitochondrial morphology and function as well as for autophagy of dysfunctional mitochondria. Plays a role in regulating expression or stability of the mitochondrial uncoupling proteins SLC25A14 and SLC25A27 in dopaminergic neurons of the substantia nigra pars compacta and attenuates the oxidative stress induced by calcium entry into the neurons via L-type channels during pacemaking. Regulates astrocyte inflammatory responses, may modulate lipid rafts-dependent endocytosis in astrocytes and neuronal cells. In pancreatic islets, involved in the maintenance of mitochondrial reactive oxygen species (ROS) levels and glucose homeostasis in an age- and diet dependent manner. Protects pancreatic beta cells from cell death induced by inflammatory and cytotoxic setting. Binds to a number of mRNAs containing multiple copies of GG or CC motifs and partially inhibits their translation but dissociates following oxidative stress. Metal-binding protein able to bind copper as well as toxic mercury ions, enhances the cell protection mechanism against induced metal toxicity. In macrophages, interacts with the NADPH oxidase subunit NCF1 to direct NADPH oxidase-dependent ROS production, and protects against sepsis. The protein is Parkinson disease protein 7 homolog of Chlorocebus aethiops (Green monkey).